Reading from the N-terminus, the 95-residue chain is Progonadoliberin-1 (95 aa).

Positions Met-1 to Cys-25 are cleaved as a signal peptide. Gln-26 is subject to Pyrrolidone carboxylic acid. Glycine amide is present on Gly-35.

This sequence belongs to the GnRH family.

It localises to the secreted. Its function is as follows. Stimulates the secretion of gonadotropins. The sequence is that of Progonadoliberin-1 (gnrh1) from Sparus aurata (Gilthead sea bream).